A 76-amino-acid chain; its full sequence is Exodeoxyribonuclease 7 small subunit (76 aa).

The protein belongs to the XseB family. Heterooligomer composed of large and small subunits.

It is found in the cytoplasm. The catalysed reaction is Exonucleolytic cleavage in either 5'- to 3'- or 3'- to 5'-direction to yield nucleoside 5'-phosphates.. Functionally, bidirectionally degrades single-stranded DNA into large acid-insoluble oligonucleotides, which are then degraded further into small acid-soluble oligonucleotides. The protein is Exodeoxyribonuclease 7 small subunit of Staphylococcus aureus (strain Mu3 / ATCC 700698).